The primary structure comprises 697 residues: Elongation factor G (697 aa).

The region spanning 6 to 281 is the tr-type G domain; sequence ENIRNIGICA…AVVDYLPSPI (276 aa). GTP-binding positions include 15 to 22, 79 to 83, and 133 to 136; these read AHIDAGKT, DTPGH, and NKMD.

The protein belongs to the TRAFAC class translation factor GTPase superfamily. Classic translation factor GTPase family. EF-G/EF-2 subfamily.

Its subcellular location is the cytoplasm. Functionally, catalyzes the GTP-dependent ribosomal translocation step during translation elongation. During this step, the ribosome changes from the pre-translocational (PRE) to the post-translocational (POST) state as the newly formed A-site-bound peptidyl-tRNA and P-site-bound deacylated tRNA move to the P and E sites, respectively. Catalyzes the coordinated movement of the two tRNA molecules, the mRNA and conformational changes in the ribosome. The polypeptide is Elongation factor G (Rickettsia bellii (strain OSU 85-389)).